Reading from the N-terminus, the 223-residue chain is Small ribosomal subunit protein uS3 (223 aa).

The 69-residue stretch at 39–107 (VREFLHKKLA…PVQINIEEVR (69 aa)) folds into the KH type-2 domain.

It belongs to the universal ribosomal protein uS3 family. As to quaternary structure, part of the 30S ribosomal subunit. Forms a tight complex with proteins S10 and S14.

Its function is as follows. Binds the lower part of the 30S subunit head. Binds mRNA in the 70S ribosome, positioning it for translation. The sequence is that of Small ribosomal subunit protein uS3 from Francisella tularensis subsp. holarctica (strain FTNF002-00 / FTA).